Reading from the N-terminus, the 410-residue chain is FAS1 domain-containing protein CaO19.3004 (410 aa).

The signal sequence occupies residues 1 to 18 (MKLSKLLQLAVFSSLVTS). 2 stretches are compositionally biased toward basic and acidic residues: residues 64–73 (NAKFKRDPKN) and 83–96 (GSAE…REPK). The segment at 64–98 (NAKFKRDPKNVIDPASLKEGSAEEEQKDKREPKNL) is disordered. Residues 247–407 (NNLLQSILPQ…GFVLIINDSL (161 aa)) enclose the FAS1 domain.

The protein resides in the vacuole. In Candida albicans (strain SC5314 / ATCC MYA-2876) (Yeast), this protein is FAS1 domain-containing protein CaO19.3004.